Here is a 205-residue protein sequence, read N- to C-terminus: uncharacterized protein (205 aa).

This is an uncharacterized protein from Methanococcus vannielii (strain ATCC 35089 / DSM 1224 / JCM 13029 / OCM 148 / SB).